A 219-amino-acid polypeptide reads, in one-letter code: Inner membrane protein YccA (219 aa).

The Periplasmic segment spans residues 1-22 (MDRIVSSSHDRTSLLSTHKVLR). 2 helical membrane-spanning segments follow: residues 23-43 (NTYFLLSLTLAFSAITATAST) and 44-64 (VLMLPSPGLILTLVGMYGLMF). Topologically, residues 65–73 (LTYKTANKP) are periplasmic. A helical membrane pass occupies residues 74-94 (TGIISAFAFTGFLGYILGPIL). Residues 95-104 (NTYLSAGMGD) are Cytoplasmic-facing. Residues 105 to 125 (VIAMALGGTALVFFCCSAYVL) form a helical membrane-spanning segment. The Periplasmic segment spans residues 126-133 (TTRKDMSF). The helical transmembrane segment at 134 to 154 (LGGMLMAGIVVVLIGMVANIF) threads the bilayer. Over 155–157 (LQL) the chain is Cytoplasmic. The helical transmembrane segment at 158–178 (PALHLAISAVFILISSGAILF) threads the bilayer. Residues 179–195 (ETSNIIHGGETNYIRAT) are Periplasmic-facing. A helical membrane pass occupies residues 196–216 (VSLYVSLYNIFVSLLSILGFA). Topologically, residues 217 to 219 (SRD) are cytoplasmic.

This sequence belongs to the BI1 family.

The protein resides in the cell inner membrane. This chain is Inner membrane protein YccA (yccA), found in Escherichia coli O6:H1 (strain CFT073 / ATCC 700928 / UPEC).